The chain runs to 638 residues: DNA mismatch repair protein MutL (638 aa).

The segment at 404-433 (FGTQTNAFGSMATPRDNSRGNYSAGESRQR) is disordered.

This sequence belongs to the DNA mismatch repair MutL/HexB family.

Functionally, this protein is involved in the repair of mismatches in DNA. It is required for dam-dependent methyl-directed DNA mismatch repair. May act as a 'molecular matchmaker', a protein that promotes the formation of a stable complex between two or more DNA-binding proteins in an ATP-dependent manner without itself being part of a final effector complex. The sequence is that of DNA mismatch repair protein MutL from Shewanella baltica (strain OS195).